Here is a 152-residue protein sequence, read N- to C-terminus: Ubiquitin-conjugating enzyme E2 1 (152 aa).

Residues P4 to T150 enclose the UBC core domain. Catalysis depends on C88, which acts as the Glycyl thioester intermediate. The disordered stretch occupies residues N119–D152. A compositionally biased stretch (basic and acidic residues) spans S131 to V145.

Belongs to the ubiquitin-conjugating enzyme family. As to expression, ubiquitously expressed.

It carries out the reaction S-ubiquitinyl-[E1 ubiquitin-activating enzyme]-L-cysteine + [E2 ubiquitin-conjugating enzyme]-L-cysteine = [E1 ubiquitin-activating enzyme]-L-cysteine + S-ubiquitinyl-[E2 ubiquitin-conjugating enzyme]-L-cysteine.. The protein operates within protein modification; protein ubiquitination. Accepts the ubiquitin from the E1 complex and catalyzes its covalent attachment to other proteins. The chain is Ubiquitin-conjugating enzyme E2 1 (UBC1) from Arabidopsis thaliana (Mouse-ear cress).